A 258-amino-acid polypeptide reads, in one-letter code: Deoxyribose-phosphate aldolase (258 aa).

Asp102 functions as the Proton donor/acceptor in the catalytic mechanism. The active-site Schiff-base intermediate with acetaldehyde is the Lys165. The active-site Proton donor/acceptor is the Lys199.

Belongs to the DeoC/FbaB aldolase family. DeoC type 2 subfamily.

The protein resides in the cytoplasm. The catalysed reaction is 2-deoxy-D-ribose 5-phosphate = D-glyceraldehyde 3-phosphate + acetaldehyde. It functions in the pathway carbohydrate degradation; 2-deoxy-D-ribose 1-phosphate degradation; D-glyceraldehyde 3-phosphate and acetaldehyde from 2-deoxy-alpha-D-ribose 1-phosphate: step 2/2. Its function is as follows. Catalyzes a reversible aldol reaction between acetaldehyde and D-glyceraldehyde 3-phosphate to generate 2-deoxy-D-ribose 5-phosphate. The sequence is that of Deoxyribose-phosphate aldolase from Aliivibrio salmonicida (strain LFI1238) (Vibrio salmonicida (strain LFI1238)).